Reading from the N-terminus, the 314-residue chain is Ribosomal RNA small subunit methyltransferase H (314 aa).

Residues 37-39 (GGH), Asp56, Phe86, Asp108, and His115 each bind S-adenosyl-L-methionine.

This sequence belongs to the methyltransferase superfamily. RsmH family.

Its subcellular location is the cytoplasm. It carries out the reaction cytidine(1402) in 16S rRNA + S-adenosyl-L-methionine = N(4)-methylcytidine(1402) in 16S rRNA + S-adenosyl-L-homocysteine + H(+). Its function is as follows. Specifically methylates the N4 position of cytidine in position 1402 (C1402) of 16S rRNA. The chain is Ribosomal RNA small subunit methyltransferase H from Leptospira biflexa serovar Patoc (strain Patoc 1 / ATCC 23582 / Paris).